The primary structure comprises 37 residues: Large ribosomal subunit protein bL36 (37 aa).

This sequence belongs to the bacterial ribosomal protein bL36 family.

The sequence is that of Large ribosomal subunit protein bL36 from Nocardioides sp. (strain ATCC BAA-499 / JS614).